The chain runs to 462 residues: Argininosuccinate lyase (462 aa).

The protein belongs to the lyase 1 family. Argininosuccinate lyase subfamily.

It localises to the cytoplasm. The enzyme catalyses 2-(N(omega)-L-arginino)succinate = fumarate + L-arginine. It functions in the pathway amino-acid biosynthesis; L-arginine biosynthesis; L-arginine from L-ornithine and carbamoyl phosphate: step 3/3. This Prochlorococcus marinus (strain MIT 9211) protein is Argininosuccinate lyase.